A 599-amino-acid polypeptide reads, in one-letter code: Putative sensor histidine kinase NtrY-like (599 aa).

The next 4 membrane-spanning stretches (helical) occupy residues Val17–Ile37, Phe44–Val64, Ile85–Val105, and Ile285–Phe305. The 55-residue stretch at Ala307–Arg361 folds into the HAMP domain. In terms of domain architecture, Histidine kinase spans Lys378 to Glu589. His381 carries the post-translational modification Phosphohistidine; by autocatalysis.

The protein localises to the cell membrane. The enzyme catalyses ATP + protein L-histidine = ADP + protein N-phospho-L-histidine.. In terms of biological role, member of the two-component regulatory system RC0948/RC0849. The sequence is that of Putative sensor histidine kinase NtrY-like from Rickettsia conorii (strain ATCC VR-613 / Malish 7).